A 628-amino-acid polypeptide reads, in one-letter code: tRNA uridine 5-carboxymethylaminomethyl modification enzyme MnmG (628 aa).

FAD is bound at residue 13–18 (GAGHAG). 273–287 (GPRYCPSIEDKIVRF) contacts NAD(+).

Belongs to the MnmG family. As to quaternary structure, homodimer. Heterotetramer of two MnmE and two MnmG subunits. It depends on FAD as a cofactor.

The protein localises to the cytoplasm. Its function is as follows. NAD-binding protein involved in the addition of a carboxymethylaminomethyl (cmnm) group at the wobble position (U34) of certain tRNAs, forming tRNA-cmnm(5)s(2)U34. This is tRNA uridine 5-carboxymethylaminomethyl modification enzyme MnmG from Buchnera aphidicola subsp. Acyrthosiphon pisum (strain Tuc7).